The primary structure comprises 152 residues: 3-hydroxyacyl-[acyl-carrier-protein] dehydratase FabZ (152 aa).

His58 is an active-site residue.

This sequence belongs to the thioester dehydratase family. FabZ subfamily.

It localises to the cytoplasm. The enzyme catalyses a (3R)-hydroxyacyl-[ACP] = a (2E)-enoyl-[ACP] + H2O. Its function is as follows. Involved in unsaturated fatty acids biosynthesis. Catalyzes the dehydration of short chain beta-hydroxyacyl-ACPs and long chain saturated and unsaturated beta-hydroxyacyl-ACPs. The sequence is that of 3-hydroxyacyl-[acyl-carrier-protein] dehydratase FabZ from Synechococcus sp. (strain RCC307).